The primary structure comprises 1003 residues: Glutamate receptor ionotropic, NMDA 3B (1003 aa).

An N-terminal signal peptide occupies residues 1–24 (MECVQTLWLSLALALARGSWVVRG). Over 25-574 (HPQPCGVPTR…PIGAFMWPLH (550 aa)) the chain is Extracellular. N-linked (GlcNAc...) asparagine glycans are attached at residues N69, N212, N344, N451, and N465. Disulfide bonds link C439–C475 and C445–C476. Glycine contacts are provided by S531, S533, and R538. D-serine contacts are provided by S533 and R538. The helical transmembrane segment at 575 to 594 (WSMWVGVFAALHLTALFLTL) threads the bilayer. The Cytoplasmic portion of the chain corresponds to 595-615 (YEWRSPYGLTPRGRNRGTVFS). An intramembrane region (discontinuously helical) is located at residues 616-627 (YSSALNLCYAIL). Residues 628-641 (FGRTVSSKTPKCPT) lie on the Cytoplasmic side of the membrane. A helical transmembrane segment spans residues 642-661 (GRFLMNLWAIFCLLVLSSYT). At 662–832 (ANLAAVMVGD…TLQMGVYHLS (171 aa)) the chain is on the extracellular side. S701 provides a ligand contact to glycine. Residues S701, A702, and D745 each contribute to the D-serine site. Residue D745 coordinates glycine. A glycan (N-linked (GlcNAc...) asparagine) is linked at N786. A helical membrane pass occupies residues 833-848 (GLFVLLCLGLGSALLT). The Cytoplasmic portion of the chain corresponds to 849–1003 (SLGEHVFYRL…RLLHAAPAES (155 aa)). Residues 883–912 (LNTGPPEGQQERAEQECSGPKEEQPAADGA) are disordered. Residues 891–906 (QQERAEQECSGPKEEQ) are compositionally biased toward basic and acidic residues. Residues 947–986 (SNGPGVQAELRELELRIEAARERLRSALLRRGELRAQLGD) are a coiled coil. The segment at 952-985 (VQAELRELELRIEAARERLRSALLRRGELRAQLG) is involved in the trafficking and surface expression of NMDARs.

Belongs to the glutamate-gated ion channel (TC 1.A.10.1) family. NR3B/GRIN3B subfamily. In terms of assembly, forms heterotetrameric channels that contain at least two GluN1 subunits and at least a combination of one GluN2 and one GluN3 subunits (in vitro). Forms heterotetrameric channels composed of two GluN1/zeta subunits (GRIN1), and two identical GluN3 subunits (GRIN3A or GRIN3B) (in vitro). Does not form functional homomeric channels. As to expression, expressed in the facial nucleus and the ambiguus nucleus of the brainstem, pons, medulla, spinal cord and cerebellum.

It localises to the cell membrane. The protein localises to the postsynaptic cell membrane. It carries out the reaction Ca(2+)(in) = Ca(2+)(out). The catalysed reaction is Na(+)(in) = Na(+)(out). Its function is as follows. Component of a non-conventional N-methyl-D-aspartate (NMDA) receptors (NMDARs) that function as heterotetrameric, ligand-gated cation channels with low calcium permeability and low voltage-dependent block by Mg(2+). Forms glutamatergic receptor complexes with GluN1 and GluN2 subunits which are activated by glycine binding to the GluN1 and GluN3 subunits and L-glutamate binding to GluN2 subunits. Forms excitatory glycinergic receptor complexes with GluN1 alone which are activated by glycine binding to the GluN1 and GluN3 subunits. GluN3B subunit also binds D-serine and, in the absence of glycine, activates glycinergic receptor complexes, but with lower efficacy than glycine. Each GluN3 subunit confers differential attributes to channel properties, including activation, deactivation and desensitization kinetics, pH sensitivity, Ca2(+) permeability, and binding to allosteric modulators. The chain is Glutamate receptor ionotropic, NMDA 3B from Mus musculus (Mouse).